A 70-amino-acid polypeptide reads, in one-letter code: Putative membrane protein insertion efficiency factor (70 aa).

Belongs to the UPF0161 family.

It localises to the cell membrane. Could be involved in insertion of integral membrane proteins into the membrane. In Moorella thermoacetica (strain ATCC 39073 / JCM 9320), this protein is Putative membrane protein insertion efficiency factor.